The chain runs to 170 residues: Peptide deformylase (170 aa).

Fe cation is bound by residues cysteine 91 and histidine 133. Glutamate 134 is an active-site residue. Histidine 137 is a Fe cation binding site.

Belongs to the polypeptide deformylase family. It depends on Fe(2+) as a cofactor.

The enzyme catalyses N-terminal N-formyl-L-methionyl-[peptide] + H2O = N-terminal L-methionyl-[peptide] + formate. In terms of biological role, removes the formyl group from the N-terminal Met of newly synthesized proteins. Requires at least a dipeptide for an efficient rate of reaction. N-terminal L-methionine is a prerequisite for activity but the enzyme has broad specificity at other positions. The chain is Peptide deformylase from Actinobacillus pleuropneumoniae serotype 7 (strain AP76).